Here is a 180-residue protein sequence, read N- to C-terminus: Bifunctional protein PyrR (180 aa).

The PRPP-binding motif lies at 101–113 (VILIDDVLFTGRT).

This sequence belongs to the purine/pyrimidine phosphoribosyltransferase family. PyrR subfamily. As to quaternary structure, homodimer and homohexamer; in equilibrium.

The enzyme catalyses UMP + diphosphate = 5-phospho-alpha-D-ribose 1-diphosphate + uracil. Regulates transcriptional attenuation of the pyrimidine nucleotide (pyr) operon by binding in a uridine-dependent manner to specific sites on pyr mRNA. This disrupts an antiterminator hairpin in the RNA and favors formation of a downstream transcription terminator, leading to a reduced expression of downstream genes. Functionally, also displays a weak uracil phosphoribosyltransferase activity which is not physiologically significant. The protein is Bifunctional protein PyrR of Oceanobacillus iheyensis (strain DSM 14371 / CIP 107618 / JCM 11309 / KCTC 3954 / HTE831).